A 327-amino-acid polypeptide reads, in one-letter code: MVKQLTDAFARKFYYLRLSITDVCNFRCTYCLPDGYKPRGHHSFLTLPEIRLVGRAFADLGTEKIRLTGGEPTMRRDFTDIISVIRENKLIKTLAVTTNGYRMERDIAKWKEAGLTAVNVSMDSLDPRQFHAITGQDKFFQVMRGIDAAFAVGFSKVKVNVVLMKNVNDISLSAFLHWIKDRPIQLRFIELMETGDGGEMFRQYHISGEIIRERLLLDGWHLLQRSRSDGPAQVFSHPDYQGEVGLIMPYEKNFCQSCNRLRVSSIGHLHLCLFGEQGIPLRDLLASEKQLDDLKLRIQDGLRHKRETHFLHQGDSGITPNLSVIGG.

A Radical SAM core domain is found at 8 to 232; the sequence is AFARKFYYLR…LQRSRSDGPA (225 aa). R17 is a GTP binding site. [4Fe-4S] cluster contacts are provided by C24 and C28. Residue Y30 participates in S-adenosyl-L-methionine binding. A [4Fe-4S] cluster-binding site is contributed by C31. R66 serves as a coordination point for GTP. S-adenosyl-L-methionine is bound at residue G70. Position 97 (T97) interacts with GTP. S-adenosyl-L-methionine is bound at residue S121. Position 158 (K158) interacts with GTP. M192 is an S-adenosyl-L-methionine binding site. [4Fe-4S] cluster is bound by residues C255 and C258. Position 260 to 262 (260 to 262) interacts with GTP; that stretch reads RLR. C272 contacts [4Fe-4S] cluster.

This sequence belongs to the radical SAM superfamily. MoaA family. As to quaternary structure, monomer and homodimer. [4Fe-4S] cluster is required as a cofactor.

It catalyses the reaction GTP + AH2 + S-adenosyl-L-methionine = (8S)-3',8-cyclo-7,8-dihydroguanosine 5'-triphosphate + 5'-deoxyadenosine + L-methionine + A + H(+). It functions in the pathway cofactor biosynthesis; molybdopterin biosynthesis. Its function is as follows. Catalyzes the cyclization of GTP to (8S)-3',8-cyclo-7,8-dihydroguanosine 5'-triphosphate. The chain is GTP 3',8-cyclase from Photorhabdus laumondii subsp. laumondii (strain DSM 15139 / CIP 105565 / TT01) (Photorhabdus luminescens subsp. laumondii).